The sequence spans 1486 residues: Chromosome partition protein MukB (1486 aa).

34-41 (GGNGAGKS) contacts ATP. 3 coiled-coil regions span residues 326–418 (LEAD…QYNQ), 444–480 (LETF…QAYQ), and 509–603 (RHLA…RAPV). A flexible hinge region spans residues 666-783 (PGGSEDQRLN…EVPLFGRAAR (118 aa)). 3 coiled-coil regions span residues 835-923 (EAEI…AKLE), 977-1115 (EMLS…TAKA), and 1209-1266 (VEAI…QNVS).

It belongs to the SMC family. MukB subfamily. Homodimerization via its hinge domain. Binds to DNA via its C-terminal region. Interacts, and probably forms a ternary complex, with MukE and MukF via its C-terminal region. The complex formation is stimulated by calcium or magnesium. Interacts with tubulin-related protein FtsZ.

It localises to the cytoplasm. The protein localises to the nucleoid. In terms of biological role, plays a central role in chromosome condensation, segregation and cell cycle progression. Functions as a homodimer, which is essential for chromosome partition. Involved in negative DNA supercoiling in vivo, and by this means organize and compact chromosomes. May achieve or facilitate chromosome segregation by condensation DNA from both sides of a centrally located replisome during cell division. The chain is Chromosome partition protein MukB from Escherichia coli O6:H1 (strain CFT073 / ATCC 700928 / UPEC).